A 527-amino-acid polypeptide reads, in one-letter code: Putative adhesin P1-like protein MPN_500 (527 aa).

Disordered regions lie at residues Met1–Ser26, Gly76–Tyr148, Ala248–Ser269, and Phe468–His527. Residues Thr9–Ser26 show a composition bias toward low complexity. Residues Thr82–Phe95 show a composition bias toward polar residues. The span at Ser108–Asn117 shows a compositional bias: low complexity. Residues Gln128–Tyr148 show a composition bias toward polar residues. Low complexity predominate over residues Ala248–Gly262. Polar residues predominate over residues Phe468–Leu495. Residues Ser500–Gln513 show a composition bias toward gly residues.

The protein belongs to the adhesin P1 family.

The polypeptide is Putative adhesin P1-like protein MPN_500 (Mycoplasma pneumoniae (strain ATCC 29342 / M129 / Subtype 1) (Mycoplasmoides pneumoniae)).